The chain runs to 928 residues: Echinoderm microtubule-associated protein-like 4 (928 aa).

The tract at residues 1-189 (MDGFAGSLDD…IPSDVENYDD (189 aa)) is microtubule-binding. A coiled-coil region spans residues 14 to 63 (AASTSDVQDRLSALELRVQQQEDEITVLKAALADVLRRLAISEDQVATVR). The segment at 107–131 (SAAKSVKRSSTIEKSHNSWDASEES) is disordered. A compositionally biased stretch (basic and acidic residues) spans 116–131 (STIEKSHNSWDASEES). WD repeat units lie at residues 199-237 (LKLEWVFGYRGRDCRANVYLLPTGEIVYFIASVVVLFNY), 241-288 (TQRH…VWDS), 296-336 (VIGL…VWDW), 343-378 (AEIKTTNEVVLTVEFHPTDACTIVTCGKSHIFFWTW), 385-424 (RKQGIFGKYEKPKFVQCLAFLANGDVLAGDSGGVMLIWSK), 442-480 (QISRQIKAHDGSVFTLCQMRNGMLLTGGGKDRKVIMWDH), 485-521 (EREIEVPDQYGTIRAVAEGKGDQFLIGTSRNFILRGT), 524-563 (DGFQVEVQGHTDELWGLATHPFKDLLLTCAQDKQVCLWNS), 567-604 (SLEWTRVLDEPGHCADFHPTGTVVAIGTHSGRWFVLDA), 610-646 (VSIHTDGNEQLSVMRYSVDGALLAVGSHDNFIYLYNV), 653-692 (YSRYGKCTGHSSYITHLDWSPDNQYIMSNSGDYEILYWDI), 702-760 (RSDC…LFQY), and 767-806 (APSHKYSAHSSHVTNVSFTHKDSHLISTGGKDMSIMQWRL). The interval 821-928 (SSSAVNSPVV…ENQDDSSPLS (108 aa)) is disordered. A compositionally biased stretch (polar residues) spans 836–845 (QPNTPTNLPQ). Residues 867–876 (DALEQPEELN) are compositionally biased toward acidic residues. Positions 877–898 (EVQSEKCSSQPEGANGQEPSNE) are enriched in polar residues.

This sequence belongs to the WD repeat EMAP family. As to quaternary structure, homotrimer; self-association is mediated by the N-terminal coiled coil.

It is found in the cytoplasm. It localises to the cytoskeleton. The protein resides in the spindle. The protein localises to the microtubule organizing center. Its subcellular location is the midbody. Functionally, essential for the formation and stability of microtubules (MTs). Required for the organization of the mitotic spindle and for the proper attachment of kinetochores to MTs. Promotes the recruitment of NUDC to the mitotic spindle for mitotic progression. The polypeptide is Echinoderm microtubule-associated protein-like 4 (eml4) (Xenopus tropicalis (Western clawed frog)).